The sequence spans 1055 residues: Cellulose synthase A catalytic subunit 9 [UDP-forming] (1055 aa).

At 1–268 (MEASAGLVAG…ASSKVNPYRM (268 aa)) the chain is on the cytoplasmic side. Cys-37, Cys-40, Cys-56, Cys-59, Cys-64, Cys-67, Cys-79, and Cys-82 together coordinate Zn(2+). The RING-type; degenerate zinc finger occupies 37–83 (CEICGDEVGRTVDGDLFVACNECGFPVCRPCYEYERREGTQNCPQCK). A helical transmembrane segment spans residues 269–289 (VIILRLVVLGFFLRYRILHPV). Residues 290–291 (PD) are Extracellular-facing. The chain crosses the membrane as a helical span at residues 292–312 (AIPLWLTSIICEIWFAVSWIL). Over 313 to 831 (DQFPKWYPID…LERFSYINTT (519 aa)) the chain is Cytoplasmic. Ser-351, Lys-357, Glu-358, and Asp-387 together coordinate UDP-alpha-D-glucose. Asp-387 is a catalytic residue. Residues 439–468 (NFVQERRAMKREYEEFKVRINALVAKAQKV) are a coiled coil. Lys-528 lines the UDP-alpha-D-glucose pocket. Lys-529 and Asp-553 together coordinate Mn(2+). Asp-753 is an active-site residue. Residues 832–852 (IYPFTSLPLLAYCTLPAVCLL) form a helical membrane-spanning segment. Topologically, residues 853-860 (TGKFIMPP) are extracellular. The helical transmembrane segment at 861–881 (ISTFASLFFIALFISIFATGI) threads the bilayer. Over 882 to 899 (LEMRWSGVSIEEWWRNEQ) the chain is Cytoplasmic. A helical transmembrane segment spans residues 900–920 (FWVIGGVSAHLFAVVQGLLKV). At 921–951 (LAGIDTNFTVTSKATGDEDDEFAELYAFKWT) the chain is on the extracellular side. The N-linked (GlcNAc...) asparagine glycan is linked to Asn-927. Residues 952–972 (TLLIPPTTLLILNIIGVVAGV) traverse the membrane as a helical segment. Residues 973–983 (SDAINNGSEAW) lie on the Cytoplasmic side of the membrane. A helical transmembrane segment spans residues 984-1004 (GPLFGKLFFAFWVIVHLYPFL). At 1005 to 1013 (KGLMGRQNR) the chain is on the extracellular side. Residues 1014 to 1034 (TPTIVVIWSVLLASIFSLLWV) traverse the membrane as a helical segment. Over 1035–1055 (RIDPFTIKARGPDVRQCGINC) the chain is Cytoplasmic.

It belongs to the glycosyltransferase 2 family. Plant cellulose synthase subfamily. Mn(2+) serves as cofactor. The cofactor is Zn(2+).

Its subcellular location is the cell membrane. It catalyses the reaction [(1-&gt;4)-beta-D-glucosyl](n) + UDP-alpha-D-glucose = [(1-&gt;4)-beta-D-glucosyl](n+1) + UDP + H(+). It participates in glycan metabolism; plant cellulose biosynthesis. Catalytic subunit of cellulose synthase terminal complexes ('rosettes'), required for beta-1,4-glucan microfibril crystallization, a major mechanism of the cell wall formation. Involved in the secondary cell wall formation. The chain is Cellulose synthase A catalytic subunit 9 [UDP-forming] (CESA9) from Oryza sativa subsp. indica (Rice).